Here is a 343-residue protein sequence, read N- to C-terminus: N-acetyl-gamma-glutamyl-phosphate reductase (343 aa).

The active site involves C147.

It belongs to the NAGSA dehydrogenase family. Type 1 subfamily.

It is found in the cytoplasm. The enzyme catalyses N-acetyl-L-glutamate 5-semialdehyde + phosphate + NADP(+) = N-acetyl-L-glutamyl 5-phosphate + NADPH + H(+). Its pathway is amino-acid biosynthesis; L-arginine biosynthesis; N(2)-acetyl-L-ornithine from L-glutamate: step 3/4. Its function is as follows. Catalyzes the NADPH-dependent reduction of N-acetyl-5-glutamyl phosphate to yield N-acetyl-L-glutamate 5-semialdehyde. The chain is N-acetyl-gamma-glutamyl-phosphate reductase from Staphylococcus saprophyticus subsp. saprophyticus (strain ATCC 15305 / DSM 20229 / NCIMB 8711 / NCTC 7292 / S-41).